Here is a 706-residue protein sequence, read N- to C-terminus: Elongation factor G (706 aa).

A tr-type G domain is found at 8 to 290 (NRYRNIGICA…AVIDYLPAPT (283 aa)). Residues 17–24 (AHVDAGKT), 88–92 (DTPGH), and 142–145 (NKMD) each bind GTP.

The protein belongs to the TRAFAC class translation factor GTPase superfamily. Classic translation factor GTPase family. EF-G/EF-2 subfamily.

It localises to the cytoplasm. In terms of biological role, catalyzes the GTP-dependent ribosomal translocation step during translation elongation. During this step, the ribosome changes from the pre-translocational (PRE) to the post-translocational (POST) state as the newly formed A-site-bound peptidyl-tRNA and P-site-bound deacylated tRNA move to the P and E sites, respectively. Catalyzes the coordinated movement of the two tRNA molecules, the mRNA and conformational changes in the ribosome. This is Elongation factor G from Stutzerimonas stutzeri (strain A1501) (Pseudomonas stutzeri).